The following is a 1024-amino-acid chain: DNA-directed RNA polymerase subunit beta (1024 aa).

This sequence belongs to the RNA polymerase beta chain family. In plastids the minimal PEP RNA polymerase catalytic core is composed of four subunits: alpha, beta, beta', and beta''. When a (nuclear-encoded) sigma factor is associated with the core the holoenzyme is formed, which can initiate transcription (Potential).

The protein localises to the plastid. Its subcellular location is the apicoplast. It catalyses the reaction RNA(n) + a ribonucleoside 5'-triphosphate = RNA(n+1) + diphosphate. Its function is as follows. DNA-dependent RNA polymerase catalyzes the transcription of DNA into RNA using the four ribonucleoside triphosphates as substrates. In Plasmodium falciparum (isolate 3D7), this protein is DNA-directed RNA polymerase subunit beta (rpoB).